Reading from the N-terminus, the 105-residue chain is Large ribosomal subunit protein uL24 (105 aa).

The protein belongs to the universal ribosomal protein uL24 family. In terms of assembly, part of the 50S ribosomal subunit.

In terms of biological role, one of two assembly initiator proteins, it binds directly to the 5'-end of the 23S rRNA, where it nucleates assembly of the 50S subunit. One of the proteins that surrounds the polypeptide exit tunnel on the outside of the subunit. The polypeptide is Large ribosomal subunit protein uL24 (Sorangium cellulosum (strain So ce56) (Polyangium cellulosum (strain So ce56))).